The following is a 523-amino-acid chain: Glycerate kinase (523 aa).

Residue serine 60 is modified to Phosphoserine.

The protein belongs to the glycerate kinase type-2 family. As to expression, widely expressed.

It localises to the cytoplasm. Its subcellular location is the mitochondrion. It carries out the reaction (R)-glycerate + ATP = (2R)-3-phosphoglycerate + ADP + H(+). This Homo sapiens (Human) protein is Glycerate kinase (GLYCTK).